The sequence spans 485 residues: Sulfated surface glycoprotein 185 (485 aa).

The N-terminal stretch at 1–20 is a signal peptide; sequence MSKLLLVALFGAIAVVATSA. N193 carries N-linked (GlcNAc...) asparagine glycosylation. The segment at 212 to 317 is disordered; sequence LSGPNVNPIG…PPVPPPPSPP (106 aa). Composition is skewed to pro residues over residues 221 to 234 and 241 to 317; these read GPAPNNSPLPPSPQ and PPSP…PSPP. The N-linked (GlcNAc...) asparagine glycan is linked to N347.

In terms of assembly, polymer. Post-translationally, intersubunit cross-links are formed between saccharide chains rather than between polypeptide chains. Hydroxylated on proline residues in the Pro-rich central domain. In terms of processing, glycosylated; contains sulfate-substituted glycans.

Its function is as follows. The extracellular matrix (ECM) of Volvox contains insoluble fibrous layers that surround individual cells at a distance to form contiguous cellular compartments. SSG 185 is the monomeric precursor of this substructure (C3Z structure). This Volvox carteri (Green alga) protein is Sulfated surface glycoprotein 185.